Here is a 202-residue protein sequence, read N- to C-terminus: Imidazole glycerol phosphate synthase subunit HisH 2 (202 aa).

The Glutamine amidotransferase type-1 domain occupies 1–202; that stretch reads MIAIIDYGMG…KLMENFIKQA (202 aa). Cys-80 serves as the catalytic Nucleophile. Active-site residues include His-183 and Glu-185.

As to quaternary structure, heterodimer of HisH and HisF.

It is found in the cytoplasm. The catalysed reaction is 5-[(5-phospho-1-deoxy-D-ribulos-1-ylimino)methylamino]-1-(5-phospho-beta-D-ribosyl)imidazole-4-carboxamide + L-glutamine = D-erythro-1-(imidazol-4-yl)glycerol 3-phosphate + 5-amino-1-(5-phospho-beta-D-ribosyl)imidazole-4-carboxamide + L-glutamate + H(+). It catalyses the reaction L-glutamine + H2O = L-glutamate + NH4(+). Its pathway is amino-acid biosynthesis; L-histidine biosynthesis; L-histidine from 5-phospho-alpha-D-ribose 1-diphosphate: step 5/9. Functionally, IGPS catalyzes the conversion of PRFAR and glutamine to IGP, AICAR and glutamate. The HisH subunit provides the glutamine amidotransferase activity that produces the ammonia necessary to HisF for the synthesis of IGP and AICAR. This Methanococcus maripaludis (strain DSM 14266 / JCM 13030 / NBRC 101832 / S2 / LL) protein is Imidazole glycerol phosphate synthase subunit HisH 2 (hisH2).